A 72-amino-acid chain; its full sequence is Small ribosomal subunit protein bS18 (72 aa).

This sequence belongs to the bacterial ribosomal protein bS18 family. In terms of assembly, part of the 30S ribosomal subunit. Forms a tight heterodimer with protein bS6.

Functionally, binds as a heterodimer with protein bS6 to the central domain of the 16S rRNA, where it helps stabilize the platform of the 30S subunit. This is Small ribosomal subunit protein bS18 from Francisella philomiragia subsp. philomiragia (strain ATCC 25017 / CCUG 19701 / FSC 153 / O#319-036).